The sequence spans 235 residues: 15,16-dihydrobiliverdin:ferredoxin oxidoreductase (235 aa).

Belongs to the HY2 family.

It carries out the reaction 15,16-dihydrobiliverdin + oxidized 2[4Fe-4S]-[ferredoxin] = biliverdin IXalpha + reduced 2[4Fe-4S]-[ferredoxin] + 2 H(+). In terms of biological role, catalyzes the two-electron reduction of biliverdin IX-alpha at the C15 methine bridge. The chain is 15,16-dihydrobiliverdin:ferredoxin oxidoreductase from Synechococcus sp. (strain CC9902).